The following is a 234-amino-acid chain: bZIP transcription factor 27 (234 aa).

Residues 152–159 (KKRGQDSD) carry the Nuclear localization signal motif. Positions 163-213 (GDRRYKRMIKNRESAARSRARKQAYTNELELEIAHLQTENARLKIQQEQLK) constitute a bZIP domain. The basic motif stretch occupies residues 165 to 184 (RRYKRMIKNRESAARSRARK). A leucine-zipper region spans residues 191-212 (LELEIAHLQTENARLKIQQEQL). The residue at position 231 (Thr-231) is a Phosphothreonine.

This sequence belongs to the bZIP family. In terms of assembly, self-interacts. Interacts with FT and FD/BZIP14. Interacts with CPK33. Phosphorylated. As to expression, expressed on the flanks of the shoot apex.

It is found in the nucleus. Its function is as follows. Transcription factor required for the transition to flowering promoted by FT. This chain is bZIP transcription factor 27, found in Arabidopsis thaliana (Mouse-ear cress).